The primary structure comprises 284 residues: Protease HtpX homolog (284 aa).

Transmembrane regions (helical) follow at residues 7 to 26 (TYLL…MMLH) and 33 to 47 (IILA…YYMS). His-129 is a binding site for Zn(2+). The active site involves Glu-130. Zn(2+) is bound at residue His-133. 2 consecutive transmembrane segments (helical) span residues 148–168 (LAGA…IFFV) and 180–200 (IGTI…QFAI). Glu-205 contributes to the Zn(2+) binding site.

It belongs to the peptidase M48B family. Zn(2+) is required as a cofactor.

It localises to the cell membrane. In Methanocaldococcus jannaschii (strain ATCC 43067 / DSM 2661 / JAL-1 / JCM 10045 / NBRC 100440) (Methanococcus jannaschii), this protein is Protease HtpX homolog.